The primary structure comprises 469 residues: Glutamine synthetase (469 aa).

Positions 13–97 (NEVKFVDLRF…IRCDILEPAT (85 aa)) constitute a GS beta-grasp domain. One can recognise a GS catalytic domain in the interval 105 to 469 (PRSIAKRAEE…PLEFELYYSV (365 aa)). The Mg(2+) site is built by glutamate 130 and glutamate 132. An ATP-binding site is contributed by glutamate 208. Residues glutamate 213 and glutamate 221 each coordinate Mg(2+). Residues 265 to 266 (NG) and glycine 266 contribute to the L-glutamate site. Residue histidine 270 coordinates Mg(2+). ATP-binding positions include 272–274 (HQS) and serine 274. Positions 322, 328, and 340 each coordinate L-glutamate. ATP-binding residues include arginine 340, arginine 345, and lysine 353. Glutamate 358 is a binding site for Mg(2+). L-glutamate is bound at residue arginine 360. Position 398 is an O-AMP-tyrosine (tyrosine 398).

The protein belongs to the glutamine synthetase family. In terms of assembly, oligomer of 12 subunits arranged in the form of two hexameric ring. The cofactor is Mg(2+).

Its subcellular location is the cytoplasm. The enzyme catalyses L-glutamate + NH4(+) + ATP = L-glutamine + ADP + phosphate + H(+). With respect to regulation, the activity of this enzyme could be controlled by adenylation under conditions of abundant glutamine. Catalyzes the ATP-dependent biosynthesis of glutamine from glutamate and ammonia. This chain is Glutamine synthetase (glnAv), found in Vibrio cholerae serotype O1 (strain ATCC 39315 / El Tor Inaba N16961).